The sequence spans 254 residues: Imidazole glycerol phosphate synthase subunit HisF (254 aa).

Active-site residues include Asp-12 and Asp-131.

This sequence belongs to the HisA/HisF family. In terms of assembly, heterodimer of HisH and HisF.

It is found in the cytoplasm. The enzyme catalyses 5-[(5-phospho-1-deoxy-D-ribulos-1-ylimino)methylamino]-1-(5-phospho-beta-D-ribosyl)imidazole-4-carboxamide + L-glutamine = D-erythro-1-(imidazol-4-yl)glycerol 3-phosphate + 5-amino-1-(5-phospho-beta-D-ribosyl)imidazole-4-carboxamide + L-glutamate + H(+). Its pathway is amino-acid biosynthesis; L-histidine biosynthesis; L-histidine from 5-phospho-alpha-D-ribose 1-diphosphate: step 5/9. Its function is as follows. IGPS catalyzes the conversion of PRFAR and glutamine to IGP, AICAR and glutamate. The HisF subunit catalyzes the cyclization activity that produces IGP and AICAR from PRFAR using the ammonia provided by the HisH subunit. In Frankia casuarinae (strain DSM 45818 / CECT 9043 / HFP020203 / CcI3), this protein is Imidazole glycerol phosphate synthase subunit HisF.